We begin with the raw amino-acid sequence, 312 residues long: Aspartate carbamoyltransferase catalytic subunit (312 aa).

Positions 58 and 59 each coordinate carbamoyl phosphate. L-aspartate is bound at residue Lys86. Residues Arg108, His136, and Gln139 each contribute to the carbamoyl phosphate site. L-aspartate-binding residues include Arg169 and Arg223. Positions 264 and 265 each coordinate carbamoyl phosphate.

It belongs to the aspartate/ornithine carbamoyltransferase superfamily. ATCase family. Heterododecamer (2C3:3R2) of six catalytic PyrB chains organized as two trimers (C3), and six regulatory PyrI chains organized as three dimers (R2).

It catalyses the reaction carbamoyl phosphate + L-aspartate = N-carbamoyl-L-aspartate + phosphate + H(+). It participates in pyrimidine metabolism; UMP biosynthesis via de novo pathway; (S)-dihydroorotate from bicarbonate: step 2/3. In terms of biological role, catalyzes the condensation of carbamoyl phosphate and aspartate to form carbamoyl aspartate and inorganic phosphate, the committed step in the de novo pyrimidine nucleotide biosynthesis pathway. The protein is Aspartate carbamoyltransferase catalytic subunit of Desulforapulum autotrophicum (strain ATCC 43914 / DSM 3382 / VKM B-1955 / HRM2) (Desulfobacterium autotrophicum).